The primary structure comprises 366 residues: MALSAIGFEGYEKRLEVTFFEPSIFQDSKGLGLRALTKSQLDEILTPAACTIVSSLSNDQLDSYVLSESSFFVYPYKVIIKTCGTTKLLLSIPPLLKLAGELSLSVKSVKYTRGSFLCPGGQPFPHRSFSEEVSVLDGHFTQLGLNSVAYLMGNDDETKKWHVYAASAQDSSNCNNNVYTLEMCMTGLDREKAAVFYKDEADKTGSMTDNSGIRKILPKSEICDFEFEPCGYSMNSIEGDAISTIHVTPEDGFSYASFEAVGYDFNTLDLSQLVTRVLSCFEPKQFSVAVHSSVGANSYKPEITVDLEDYGCRERTFESLGEESGTVMYQTFEKLGKYCGSPRSTLKCEWSSNNSCSSEDEKDEGI.

Catalysis depends on residues Glu9 and Glu12. Glu68 contacts substrate. The active-site Schiff-base intermediate with substrate; via pyruvic acid is the Ser69. Ser69 is modified (pyruvic acid (Ser); by autocatalysis). Residue Cys83 is the Proton donor; for catalytic activity of the active site. Residues Ser233 and His246 each act as proton acceptor; for processing activity in the active site. Residue Glu250 coordinates substrate.

This sequence belongs to the eukaryotic AdoMetDC family. Pyruvate is required as a cofactor. In terms of processing, is synthesized initially as an inactive proenzyme. Formation of the active enzyme involves a self-maturation process in which the active site pyruvoyl group is generated from an internal serine residue via an autocatalytic post-translational modification. Two non-identical subunits are generated from the proenzyme in this reaction, and the pyruvate is formed at the N-terminus of the alpha chain, which is derived from the carboxyl end of the proenzyme. The post-translation cleavage follows an unusual pathway, termed non-hydrolytic serinolysis, in which the side chain hydroxyl group of the serine supplies its oxygen atom to form the C-terminus of the beta chain, while the remainder of the serine residue undergoes an oxidative deamination to produce ammonia and the pyruvoyl group blocking the N-terminus of the alpha chain.

The catalysed reaction is S-adenosyl-L-methionine + H(+) = S-adenosyl 3-(methylsulfanyl)propylamine + CO2. It functions in the pathway amine and polyamine biosynthesis; S-adenosylmethioninamine biosynthesis; S-adenosylmethioninamine from S-adenosyl-L-methionine: step 1/1. Its function is as follows. Essential for biosynthesis of the polyamines spermidine and spermine. Essential for polyamine homeostasis, and normal plant embryogenesis, growth and development. The chain is S-adenosylmethionine decarboxylase proenzyme 1 from Arabidopsis thaliana (Mouse-ear cress).